We begin with the raw amino-acid sequence, 230 residues long: Large ribosomal subunit protein uL1 (230 aa).

This sequence belongs to the universal ribosomal protein uL1 family. As to quaternary structure, part of the 50S ribosomal subunit.

Its function is as follows. Binds directly to 23S rRNA. The L1 stalk is quite mobile in the ribosome, and is involved in E site tRNA release. In terms of biological role, protein L1 is also a translational repressor protein, it controls the translation of the L11 operon by binding to its mRNA. The chain is Large ribosomal subunit protein uL1 from Onion yellows phytoplasma (strain OY-M).